A 321-amino-acid polypeptide reads, in one-letter code: NADH-quinone oxidoreductase subunit H (321 aa).

8 consecutive transmembrane segments (helical) span residues 9–29 (LLAIVKAIVTLLSVVTIGAYM), 78–98 (IIFTLAPIIAFTSLLLVFAIM), 111–131 (IGILFFLMMAGISVYAILLGG), 156–176 (FLGLSIMGVVAQAGSFNISTI), 183–203 (IWNIVPQFFGFITFYLAGLAI), 234–254 (FFIGEYISLVTISALTITLFF), 262–282 (LPPYIWFIIKTTVFIIIFILI), and 296–316 (ILGWTICLPLTLMNLLVTAIV).

It belongs to the complex I subunit 1 family. In terms of assembly, NDH-1 is composed of 14 different subunits. Subunits NuoA, H, J, K, L, M, N constitute the membrane sector of the complex.

The protein localises to the cell membrane. It catalyses the reaction a quinone + NADH + 5 H(+)(in) = a quinol + NAD(+) + 4 H(+)(out). NDH-1 shuttles electrons from NADH, via FMN and iron-sulfur (Fe-S) centers, to quinones in the respiratory chain. The immediate electron acceptor for the enzyme in this species is believed to be ubiquinone. Couples the redox reaction to proton translocation (for every two electrons transferred, four hydrogen ions are translocated across the cytoplasmic membrane), and thus conserves the redox energy in a proton gradient. This subunit may bind ubiquinone. This Baumannia cicadellinicola subsp. Homalodisca coagulata protein is NADH-quinone oxidoreductase subunit H.